A 296-amino-acid chain; its full sequence is ATP synthase gamma chain (296 aa).

Belongs to the ATPase gamma chain family. F-type ATPases have 2 components, CF(1) - the catalytic core - and CF(0) - the membrane proton channel. CF(1) has five subunits: alpha(3), beta(3), gamma(1), delta(1), epsilon(1). CF(0) has three main subunits: a, b and c.

Its subcellular location is the cell inner membrane. Functionally, produces ATP from ADP in the presence of a proton gradient across the membrane. The gamma chain is believed to be important in regulating ATPase activity and the flow of protons through the CF(0) complex. The polypeptide is ATP synthase gamma chain (Methylorubrum extorquens (strain CM4 / NCIMB 13688) (Methylobacterium extorquens)).